The chain runs to 798 residues: General transcription and DNA repair factor IIH helicase/translocase subunit XPB (798 aa).

Disordered stretches follow at residues 1–62 and 235–254; these read MGPP…EQIN and PPGATDKPTPDPAAAAGADG. Positions 6–22 match the Nuclear localization signal motif; it reads KSRKDRSGGDKFGKKRR. Basic and acidic residues predominate over residues 10–25; that stretch reads DRSGGDKFGKKRRAED. Acidic residues predominate over residues 33 to 42; the sequence is DDNDSLDATE. One can recognise a Helicase ATP-binding domain in the interval 343–504; sequence MFGNGRARSG…DLNFLIGPKL (162 aa). An ATP-binding site is contributed by 360–367; that stretch reads AGKSLVGV. The DEVH box signature appears at 457 to 460; that stretch reads DEVH. The Helicase C-terminal domain occupies 558–713; the sequence is RSCQFLIKYH…KVITHLKGMD (156 aa). The tract at residues 746-765 is disordered; sequence LPGEPGYRPSGSGGAVRRVG.

Belongs to the helicase family. RAD25/XPB subfamily. As to quaternary structure, component of the 7-subunit TFIIH core complex composed of haywire/XPB/ERCC3, XPD/ERCC2, GTF2H1, GTF2H2, GTF2H3, GTF2H4 and GTF2H5, which is active in NER. The core complex associates with the 3-subunit CDK-activating kinase (CAK) module composed of CCNH/cyclin H, CDK7 and MNAT1 to form the 10-subunit holoenzyme (holo-TFIIH) active in transcription. Interacts with PUF60. Interacts with ATF7IP. Interacts with Epstein-Barr virus EBNA2.

It localises to the nucleus. The catalysed reaction is Couples ATP hydrolysis with the unwinding of duplex DNA by translocating in the 3'-5' direction.. It carries out the reaction ATP + H2O = ADP + phosphate + H(+). In terms of biological role, ATP-dependent 3'-5' DNA helicase/translocase; binds dsDNA rather than ssDNA, unzipping it in a translocase rather than classical helicase activity. Component of the general transcription and DNA repair factor IIH (TFIIH) core complex. When complexed to CDK-activating kinase (CAK), involved in RNA transcription by RNA polymerase II. The ATPase activity of XPB/ERCC3, but not its helicase activity, is required for DNA opening; it may wrap around the damaged DNA wedging it open, causing localized melting and twisting that allows XPD/ERCC2 helicase to anchor. The ATP-dependent helicase activity of XPB/ERCC3 may be required for promoter escape. Also involved in transcription-coupled nucleotide excision repair (NER) of damaged DNA. In NER, TFIIH acts by opening DNA around the lesion to allow the excision of the damaged oligonucleotide and its replacement by a new DNA fragment. The structure of the TFIIH transcription complex differs from the NER-TFIIH complex; large movements by XPD/ERCC2 and XPB/ERCC3 are stabilized by XPA. The chain is General transcription and DNA repair factor IIH helicase/translocase subunit XPB (hay) from Drosophila melanogaster (Fruit fly).